The sequence spans 193 residues: Capsid protein (193 aa).

It localises to the virion. The chain is Capsid protein from Apple chlorotic leaf spot virus (isolate apple) (ACLSV).